The primary structure comprises 385 residues: Acetate kinase (385 aa).

Residue asparagine 9 participates in Mg(2+) binding. Position 16 (lysine 16) interacts with ATP. Residue arginine 87 coordinates substrate. Catalysis depends on aspartate 144, which acts as the Proton donor/acceptor. ATP is bound by residues 202–206 (HLGSG) and 277–279 (DIR). Glutamate 373 contributes to the Mg(2+) binding site.

Belongs to the acetokinase family. In terms of assembly, homodimer. The cofactor is Mg(2+). It depends on Mn(2+) as a cofactor.

The protein resides in the cytoplasm. The catalysed reaction is acetate + ATP = acetyl phosphate + ADP. It functions in the pathway metabolic intermediate biosynthesis; acetyl-CoA biosynthesis; acetyl-CoA from acetate: step 1/2. In terms of biological role, catalyzes the formation of acetyl phosphate from acetate and ATP. Can also catalyze the reverse reaction. The protein is Acetate kinase of Rickettsia akari (strain Hartford).